Here is a 397-residue protein sequence, read N- to C-terminus: Cystinosin (397 aa).

A signal peptide spans M1 to A24. The Lumenal segment spans residues Q25–R126. N-linked (GlcNAc...) asparagine glycosylation is found at N43 and N86. The chain crosses the membrane as a helical span at residues A127–F147. The PQ-loop 1 domain occupies S132–F187. Over Y148 to F167 the chain is Cytoplasmic. The chain crosses the membrane as a helical span at residues L168–I188. The Lumenal portion of the chain corresponds to E189–D210. A helical membrane pass occupies residues V211–Y231. The Cytoplasmic segment spans residues Q232–S239. A helical transmembrane segment spans residues F240–A260. The Lumenal portion of the chain corresponds to G261–S263. Residues V264–I284 traverse the membrane as a helical segment. Residues L271–N327 enclose the PQ-loop 2 domain. The Cytoplasmic portion of the chain corresponds to K285–W302. The helical transmembrane segment at S303–L323 threads the bilayer. At N324–K340 the chain is on the lumenal side. Residues F341–F361 form a helical membrane-spanning segment. Topologically, residues Y362–Y397 are cytoplasmic. The span at L373–E385 shows a compositional bias: polar residues. The segment at L373 to Y397 is disordered.

It belongs to the cystinosin family.

It is found in the lysosome membrane. The catalysed reaction is L-cystine(out) + H(+)(out) = L-cystine(in) + H(+)(in). Cystine/H(+) symporter that mediates export of cystine, the oxidized dimer of cysteine, from lysosomes. Involved in cysteine homeostasis during periods of fasting, which indirectly regulates mTORC1-mediated signaling by supporting de novo CoA synthesis, the TCA cycle and amino acid metabolism during periods of food shortage. Important for maintaining autophagy, and for development and survival during periods of fasting. In Drosophila melanogaster (Fruit fly), this protein is Cystinosin.